The sequence spans 355 residues: Peptide chain release factor 1 (355 aa).

At Gln233 the chain carries N5-methylglutamine.

This sequence belongs to the prokaryotic/mitochondrial release factor family. In terms of processing, methylated by PrmC. Methylation increases the termination efficiency of RF1.

It is found in the cytoplasm. Its function is as follows. Peptide chain release factor 1 directs the termination of translation in response to the peptide chain termination codons UAG and UAA. In Bacillus anthracis, this protein is Peptide chain release factor 1.